A 689-amino-acid polypeptide reads, in one-letter code: Bifunctional protein GAL10 (689 aa).

Residues 1–345 form a galactowaldenase region; the sequence is MSYILVTGGA…TTKNPFGFQI (345 aa). 3–34 is an NAD(+) binding site; it reads YILVTGGAGYIGSHTVVELVNNGYNVVVVDNL. Positions 346–689 are mutarotase; sequence NNYSWTKFDS…SYTIYRFENF (344 aa). His-534 (for mutarotase activity) is an active-site residue.

It in the N-terminal section; belongs to the NAD(P)-dependent epimerase/dehydratase family. The protein in the C-terminal section; belongs to the aldose epimerase family. The cofactor is NAD(+).

The catalysed reaction is UDP-alpha-D-glucose = UDP-alpha-D-galactose. It catalyses the reaction alpha-D-glucose = beta-D-glucose. It participates in carbohydrate metabolism; galactose metabolism. It functions in the pathway carbohydrate metabolism; hexose metabolism. Its function is as follows. Mutarotase converts alpha-aldose to the beta-anomer. It is active on D-glucose, L-arabinose, D-xylose, D-galactose, maltose and lactose. The polypeptide is Bifunctional protein GAL10 (GAL10) (Pachysolen tannophilus (Yeast)).